A 701-amino-acid chain; its full sequence is DNA ligase (701 aa).

Residues 58–62 (DYEYD), 107–108 (SL), and Glu138 each bind NAD(+). The active-site N6-AMP-lysine intermediate is the Lys140. Arg161, Glu199, Lys323, and Lys347 together coordinate NAD(+). 4 residues coordinate Zn(2+): Cys441, Cys444, Cys459, and Cys464. Residues 621–701 (EKRGKLAGLN…EEFLKMIGQQ (81 aa)) form the BRCT domain.

Belongs to the NAD-dependent DNA ligase family. LigA subfamily. Requires Mg(2+) as cofactor. The cofactor is Mn(2+).

The catalysed reaction is NAD(+) + (deoxyribonucleotide)n-3'-hydroxyl + 5'-phospho-(deoxyribonucleotide)m = (deoxyribonucleotide)n+m + AMP + beta-nicotinamide D-nucleotide.. In terms of biological role, DNA ligase that catalyzes the formation of phosphodiester linkages between 5'-phosphoryl and 3'-hydroxyl groups in double-stranded DNA using NAD as a coenzyme and as the energy source for the reaction. It is essential for DNA replication and repair of damaged DNA. This is DNA ligase from Sulfurihydrogenibium azorense (strain DSM 15241 / OCM 825 / Az-Fu1).